Reading from the N-terminus, the 638-residue chain is 1-deoxy-D-xylulose-5-phosphate synthase (638 aa).

Thiamine diphosphate contacts are provided by residues His-79 and 120–122 (GHS). Asp-151 contacts Mg(2+). Thiamine diphosphate is bound by residues 152–153 (GA), Asn-182, Tyr-291, and Glu-373. Asn-182 serves as a coordination point for Mg(2+).

The protein belongs to the transketolase family. DXPS subfamily. As to quaternary structure, homodimer. It depends on Mg(2+) as a cofactor. Requires thiamine diphosphate as cofactor.

The enzyme catalyses D-glyceraldehyde 3-phosphate + pyruvate + H(+) = 1-deoxy-D-xylulose 5-phosphate + CO2. The protein operates within metabolic intermediate biosynthesis; 1-deoxy-D-xylulose 5-phosphate biosynthesis; 1-deoxy-D-xylulose 5-phosphate from D-glyceraldehyde 3-phosphate and pyruvate: step 1/1. Functionally, catalyzes the acyloin condensation reaction between C atoms 2 and 3 of pyruvate and glyceraldehyde 3-phosphate to yield 1-deoxy-D-xylulose-5-phosphate (DXP). This is 1-deoxy-D-xylulose-5-phosphate synthase from Xanthomonas campestris pv. campestris (strain 8004).